We begin with the raw amino-acid sequence, 269 residues long: 5'-nucleotidase SurE (269 aa).

Residues aspartate 11, aspartate 12, serine 43, and asparagine 101 each contribute to the a divalent metal cation site.

The protein belongs to the SurE nucleotidase family. The cofactor is a divalent metal cation.

It is found in the cytoplasm. It catalyses the reaction a ribonucleoside 5'-phosphate + H2O = a ribonucleoside + phosphate. Its function is as follows. Nucleotidase that shows phosphatase activity on nucleoside 5'-monophosphates. The sequence is that of 5'-nucleotidase SurE from Prochlorococcus marinus (strain MIT 9313).